The chain runs to 432 residues: Enolase (432 aa).

Gln167 is a binding site for (2R)-2-phosphoglycerate. Glu209 serves as the catalytic Proton donor. Asp246, Glu290, and Asp317 together coordinate Mg(2+). (2R)-2-phosphoglycerate is bound by residues Lys342, Arg371, Ser372, and Lys393. Lys342 (proton acceptor) is an active-site residue.

This sequence belongs to the enolase family. Component of the RNA degradosome, a multiprotein complex involved in RNA processing and mRNA degradation. Mg(2+) serves as cofactor.

The protein resides in the cytoplasm. The protein localises to the secreted. Its subcellular location is the cell surface. It carries out the reaction (2R)-2-phosphoglycerate = phosphoenolpyruvate + H2O. It participates in carbohydrate degradation; glycolysis; pyruvate from D-glyceraldehyde 3-phosphate: step 4/5. Functionally, catalyzes the reversible conversion of 2-phosphoglycerate (2-PG) into phosphoenolpyruvate (PEP). It is essential for the degradation of carbohydrates via glycolysis. The protein is Enolase of Salmonella dublin (strain CT_02021853).